We begin with the raw amino-acid sequence, 882 residues long: Valine--tRNA ligase (882 aa).

A 'HIGH' region motif is present at residues 45-55; the sequence is PNVTGSLHIGH. A 'KMSKS' region motif is present at residues 525–529; sequence KFSKS. Lysine 528 lines the ATP pocket. Positions 812-881 form a coiled coil; the sequence is EGLIDVAKEK…VLKKGIQNLA (70 aa).

Belongs to the class-I aminoacyl-tRNA synthetase family. ValS type 1 subfamily. As to quaternary structure, monomer.

Its subcellular location is the cytoplasm. It catalyses the reaction tRNA(Val) + L-valine + ATP = L-valyl-tRNA(Val) + AMP + diphosphate. Catalyzes the attachment of valine to tRNA(Val). As ValRS can inadvertently accommodate and process structurally similar amino acids such as threonine, to avoid such errors, it has a 'posttransfer' editing activity that hydrolyzes mischarged Thr-tRNA(Val) in a tRNA-dependent manner. The polypeptide is Valine--tRNA ligase (Leptospira interrogans serogroup Icterohaemorrhagiae serovar copenhageni (strain Fiocruz L1-130)).